The following is a 711-amino-acid chain: Catalase HPII (711 aa).

A compositionally biased stretch (basic and acidic residues) spans 1-10 (MPSKKTDAPK). Residues 1–27 (MPSKKTDAPKQSEAAGTQTPDRANTNA) are disordered. Over residues 14–27 (AAGTQTPDRANTNA) the composition is skewed to polar residues. Catalysis depends on residues histidine 92 and asparagine 165. Tyrosine 379 is a heme binding site.

The protein belongs to the catalase family. HPII subfamily. Requires heme as cofactor.

Its subcellular location is the cytoplasm. It carries out the reaction 2 H2O2 = O2 + 2 H2O. Its function is as follows. Decomposes hydrogen peroxide into water and oxygen; serves to protect cells from the toxic effects of hydrogen peroxide. This Pseudomonas putida (Arthrobacter siderocapsulatus) protein is Catalase HPII (katE).